The chain runs to 198 residues: Small ribosomal subunit protein uS4 (198 aa).

Residues 91–151 (SRLDNIVYRL…EKSKNLKIVE (61 aa)) form the S4 RNA-binding domain.

It belongs to the universal ribosomal protein uS4 family. As to quaternary structure, part of the 30S ribosomal subunit. Contacts protein S5. The interaction surface between S4 and S5 is involved in control of translational fidelity.

In terms of biological role, one of the primary rRNA binding proteins, it binds directly to 16S rRNA where it nucleates assembly of the body of the 30S subunit. Functionally, with S5 and S12 plays an important role in translational accuracy. This Phytoplasma australiense protein is Small ribosomal subunit protein uS4.